The following is an 86-amino-acid chain: MFKLCVFVALLSLAAAAPAPAPAPGLIAPGLVAPGIWGPTVVGSPLVAPQVVSVVPGAISHAAITQVHPSPLLIKSVHGLGPVVIG.

Positions 1–16 (MFKLCVFVALLSLAAA) are cleaved as a signal peptide. 2 consecutive propeptides follow at residues 17-50 (APAP…VAPQ) and 63-75 (AITQ…LLIK). Position 85 is an isoleucine amide (isoleucine 85).

The protein resides in the secreted. This Drosophila yakuba (Fruit fly) protein is Neuropeptide-like 3 (Nplp3).